The primary structure comprises 157 residues: SsrA-binding protein (157 aa).

Residues 135 to 157 (KRDTIKDREGKREVERAMKTNHR) form a disordered region.

This sequence belongs to the SmpB family.

The protein localises to the cytoplasm. Its function is as follows. Required for rescue of stalled ribosomes mediated by trans-translation. Binds to transfer-messenger RNA (tmRNA), required for stable association of tmRNA with ribosomes. tmRNA and SmpB together mimic tRNA shape, replacing the anticodon stem-loop with SmpB. tmRNA is encoded by the ssrA gene; the 2 termini fold to resemble tRNA(Ala) and it encodes a 'tag peptide', a short internal open reading frame. During trans-translation Ala-aminoacylated tmRNA acts like a tRNA, entering the A-site of stalled ribosomes, displacing the stalled mRNA. The ribosome then switches to translate the ORF on the tmRNA; the nascent peptide is terminated with the 'tag peptide' encoded by the tmRNA and targeted for degradation. The ribosome is freed to recommence translation, which seems to be the essential function of trans-translation. This Albidiferax ferrireducens (strain ATCC BAA-621 / DSM 15236 / T118) (Rhodoferax ferrireducens) protein is SsrA-binding protein.